A 931-amino-acid polypeptide reads, in one-letter code: Short transient receptor potential channel 6 (931 aa).

Residues 1–24 form a disordered region; it reads MNQSPAAFGPRRGGSPAVVAGAGA. Over 1–406 the chain is Cytoplasmic; the sequence is MNQSPAAFGP…GLRQQTMAVK (406 aa). The segment covering 13 to 24 has biased composition (low complexity); that stretch reads GGSPAVVAGAGA. 3 ANK repeats span residues 131–160, 162–188, and 217–246; these read MGQN…LSRV, DALL…FAEG, and HDVT…RIER. Residues 407–427 traverse the membrane as a helical segment; it reads FLVVLAVAVGLPFLALVYWFA. Residues 428–438 lie on the Extracellular side of the membrane; the sequence is PCSKMGKIMRG. The helical transmembrane segment at 439–459 threads the bilayer; sequence PFMKFVAHAASFTIFLGLLVM. Residues 460–487 are Cytoplasmic-facing; that stretch reads NAADRFEGTKILPNETSTDHAKQLFRMK. Residues 488–508 form a helical membrane-spanning segment; sequence TSCFSWMEMLIISWVIGMIWA. Over 509–521 the chain is Extracellular; that stretch reads ECKEIWTQGPKEY. The helical transmembrane segment at 522–542 threads the bilayer; the sequence is LFELWNMLDFGMLAIFAASFI. At 543–592 the chain is on the cytoplasmic side; it reads ARFMAFWHASKAQSIIDANDTLKDLTKVTLGDNVKYYNLARIKWDPSDPQ. The helical transmembrane segment at 593 to 613 threads the bilayer; the sequence is IISEGLYAIAVVLSFSRIAYI. The Extracellular portion of the chain corresponds to 614 to 636; the sequence is LPANESFGPLQISLGRTVKDIFK. Residue N617 is glycosylated (N-linked (GlcNAc...) asparagine). The stretch at 618–647 is one ANK 4 repeat; it reads ESFGPLQISLGRTVKDIFKFMVIFIMVFVA. Residues 637 to 657 traverse the membrane as a helical segment; that stretch reads FMVIFIMVFVAFMIGMFNLYS. Topologically, residues 658–674 are cytoplasmic; that stretch reads YYIGAKQNEAFTTVEES. The chain crosses the membrane as a helical span at residues 675–695; that stretch reads FKTLFWAIFGLSEVKSVVINY. At 696-706 the chain is on the extracellular side; that stretch reads NHKFIENIGYV. The chain crosses the membrane as a helical span at residues 707–727; the sequence is LYGVYNVTMVIVLLNMLIAMI. The Cytoplasmic portion of the chain corresponds to 728-931; the sequence is NSSFQEIEDD…MEPNQEESNR (204 aa). S815 is subject to Phosphoserine.

Belongs to the transient receptor (TC 1.A.4) family. STrpC subfamily. TRPC6 sub-subfamily. Homodimer; forms channel complex. Interacts with MX1 and RNF24. Phosphorylated by FYN, leading to an increase of TRPC6 channel activity.

The protein resides in the cell membrane. It carries out the reaction Ca(2+)(in) = Ca(2+)(out). In terms of biological role, thought to form a receptor-activated non-selective calcium permeant cation channel. Probably is operated by a phosphatidylinositol second messenger system activated by receptor tyrosine kinases or G-protein coupled receptors. Activated by diacylglycerol (DAG) in a membrane-delimited fashion, independently of protein kinase C. Seems not to be activated by intracellular calcium store depletion. This Bos taurus (Bovine) protein is Short transient receptor potential channel 6.